The following is a 363-amino-acid chain: NADH-quinone oxidoreductase subunit H (363 aa).

9 helical membrane-spanning segments follow: residues 62–82 (GPMY…KLLF), 96–116 (FVIA…VVPF), 127–147 (VGLL…ILAG), 163–183 (AAQV…VMIA), 202–222 (FFDW…VSGV), 238–257 (EIVA…LFFL), 264–286 (ILVS…QGWV), 299–319 (KGGW…YIWF), and 339–359 (FIPL…YGVI).

This sequence belongs to the complex I subunit 1 family. NDH-1 is composed of 14 different subunits. Subunits NuoA, H, J, K, L, M, N constitute the membrane sector of the complex.

The protein localises to the cell inner membrane. The catalysed reaction is a quinone + NADH + 5 H(+)(in) = a quinol + NAD(+) + 4 H(+)(out). NDH-1 shuttles electrons from NADH, via FMN and iron-sulfur (Fe-S) centers, to quinones in the respiratory chain. The immediate electron acceptor for the enzyme in this species is believed to be ubiquinone. Couples the redox reaction to proton translocation (for every two electrons transferred, four hydrogen ions are translocated across the cytoplasmic membrane), and thus conserves the redox energy in a proton gradient. This subunit may bind ubiquinone. This Xanthomonas axonopodis pv. citri (strain 306) protein is NADH-quinone oxidoreductase subunit H.